The following is a 470-amino-acid chain: Box C/D snoRNA protein 1 (470 aa).

A disordered region spans residues M1–E70. S25 is subject to Phosphoserine. Residues E41–L51 show a composition bias toward gly residues. Residues K79, K108, K118, K138, K143, K153, K162, K173, K183, and K200 each participate in a glycyl lysine isopeptide (Lys-Gly) (interchain with G-Cter in SUMO2) cross-link. C220, C223, C232, C235, C240, C244, H248, and C254 together coordinate Zn(2+). The HIT-type zinc-finger motif lies at C220–C254. Residue K459 forms a Glycyl lysine isopeptide (Lys-Gly) (interchain with G-Cter in SUMO2) linkage.

The protein belongs to the BCD1 family. In terms of assembly, interacts with FBL, SNU13, NOP58, NUFIP1, RUVBL1, RUVBL2 and TAF9. Interacts (via HIT-type zinc finger) with the RUVBL1/RUVBL2 complex in the presence of ADP.

Functionally, required for box C/D snoRNAs accumulation involved in snoRNA processing, snoRNA transport to the nucleolus and ribosome biogenesis. In Homo sapiens (Human), this protein is Box C/D snoRNA protein 1 (ZNHIT6).